A 142-amino-acid chain; its full sequence is Transmembrane protein 170A (142 aa).

At 1 to 48 the chain is on the lumenal side; it reads MEGGGGGLGGEPGLLQQILSLRLVPRVGNVTDCQRATLCSFPEMWYGV. N-linked (GlcNAc...) asparagine glycosylation is present at Asn-29. A helical membrane pass occupies residues 49–69; the sequence is FLWALVSSLFFHIPAGLLALF. Residues 70–78 lie on the Cytoplasmic side of the membrane; it reads TLRHHKYGR. A helical transmembrane segment spans residues 79–99; that stretch reads FMSVGIFLMGVLGPISAGILT. The Lumenal portion of the chain corresponds to 100 to 114; it reads SAAIAGVYKAAGKEM. Residues 115–135 traverse the membrane as a helical segment; it reads IPFEALVLGVGQTFCVLIVSF. Residues 136-142 are Cytoplasmic-facing; that stretch reads LRILATL.

Belongs to the TMEM170 family.

The protein localises to the endoplasmic reticulum membrane. It localises to the nucleus envelope. Its function is as follows. May regulate membrane morphogenesis in the endoplasmic reticulum (ER) by promoting ER sheet formation at the expense of ER tubules. This chain is Transmembrane protein 170A (tmem170a), found in Xenopus laevis (African clawed frog).